The following is a 374-amino-acid chain: MILTELHLHHFRNYQDLTVHFNPGVNVLIGHNAQGKTNMLEAIYVLSLTKSHRTSNDHELINWQEKSALISGTVEKSIGKIPLELQFSSKGKKAKVNHLEQARLSQYVGQLNAILFAPEDLSLVKGSPALRRHFMDREFSQMSSKYLYNAGQYRTLLRQKNKYLKQLKYRQQTDRVLLGVLSDQLAAFGAEVIIARQHFLKHLEGWAADLHQEISLNKESLRLEYVNQLKVSDDTTVEEAYQALFKLYQDNEQREIEQGTTIYGPHRDDIRFLVNDKNVQAFGSQGQQRTTALSVKLAEIDLMKEQTGEYPLLLLDDVLSELDTIRQTHLLTAIQNKVQTFLTTTSLSDVARQLINEPTIFEIEHGTLNKEEVK.

ATP is bound at residue 30–37; the sequence is GHNAQGKT.

Belongs to the RecF family.

The protein localises to the cytoplasm. Its function is as follows. The RecF protein is involved in DNA metabolism; it is required for DNA replication and normal SOS inducibility. RecF binds preferentially to single-stranded, linear DNA. It also seems to bind ATP. This chain is DNA replication and repair protein RecF, found in Limosilactobacillus reuteri (strain DSM 20016) (Lactobacillus reuteri).